The sequence spans 348 residues: Protein RecA (348 aa).

66-73 (GPESSGKT) is an ATP binding site.

It belongs to the RecA family.

The protein localises to the cytoplasm. Can catalyze the hydrolysis of ATP in the presence of single-stranded DNA, the ATP-dependent uptake of single-stranded DNA by duplex DNA, and the ATP-dependent hybridization of homologous single-stranded DNAs. It interacts with LexA causing its activation and leading to its autocatalytic cleavage. This chain is Protein RecA, found in Neisseria meningitidis serogroup B (strain ATCC BAA-335 / MC58).